The primary structure comprises 738 residues: Polyphosphate kinase (738 aa).

Positions M1–L48 are disordered. Positions A19–D30 are enriched in basic and acidic residues. N91 contributes to the ATP binding site. Mg(2+) is bound by residues R427 and R457. H487 functions as the Phosphohistidine intermediate in the catalytic mechanism. Y520, R620, and H648 together coordinate ATP.

This sequence belongs to the polyphosphate kinase 1 (PPK1) family. The cofactor is Mg(2+). Post-translationally, an intermediate of this reaction is the autophosphorylated ppk in which a phosphate is covalently linked to a histidine residue through a N-P bond.

The enzyme catalyses [phosphate](n) + ATP = [phosphate](n+1) + ADP. Its function is as follows. Catalyzes the reversible transfer of the terminal phosphate of ATP to form a long-chain polyphosphate (polyP). This chain is Polyphosphate kinase, found in Mycobacterium ulcerans (strain Agy99).